A 1183-amino-acid chain; its full sequence is M-phase phosphoprotein 9 (1183 aa).

Disordered stretches follow at residues 28 to 52, 300 to 334, and 472 to 495; these read GLNL…SGKT, KLKQ…EKSD, and ISFS…SFSQ. Basic and acidic residues predominate over residues 324-334; the sequence is QSKKTPIEKSD. Residues 401-800 form a required for its centrosomal localization region; it reads TSNEMKLPSL…EAQVKQVEHE (400 aa). The tract at residues 451 to 500 is interaction with CEP97; the sequence is KPKQQISGIQPHGLPNALDDRISFSPDSVLEPSMSSPSDIDSFSQASNVT. Residues 483 to 495 show a composition bias toward low complexity; the sequence is SMSSPSDIDSFSQ. Residues 609-804 adopt a coiled-coil conformation; that stretch reads DLRAYYESEI…KQVEHENMLS (196 aa). Ser-781 carries the post-translational modification Phosphoserine; by TTBK2. Lys-784 is covalently cross-linked (Glycyl lysine isopeptide (Lys-Gly) (interchain with G-Cter in ubiquitin)). Residue Ser-788 is modified to Phosphoserine; by TTBK2. The tract at residues 801–1031 is interaction with KIF24; it reads NMLSLRHNSR…PVSTLQRTNP (231 aa). 2 disordered regions span residues 863 to 894 and 910 to 999; these read LGHR…SDTP and NWGT…GFSH. Polar residues predominate over residues 921–936; sequence SNINPRQTETSVNASR. A compositionally biased stretch (low complexity) spans 949–967; it reads LNSASQRSSSLPPSNRKSS. Ser-994 bears the Phosphoserine mark. Positions 1109–1174 form a coiled coil; that stretch reads RTLAETERFF…GSVRMTLKKF (66 aa).

As to quaternary structure, interacts with CCP110, CEP97 and KIF24. TTBK2-mediated phosphorylation at Ser-781 and Ser-788, promotes its ubiquitination at Lys-784 leading to proteasomal degradation, loss of MPHOSPH9 facilitates the removal of the CP110-CEP97 complex from the mother centrioles, promoting the initiation of ciliogenesis. Phosphorylated in M (mitotic) phase. Post-translationally, ubiquitinated at Lys-784, leading to proteasomal degradation.

It localises to the cytoplasm. Its subcellular location is the cytoskeleton. The protein resides in the microtubule organizing center. The protein localises to the centrosome. It is found in the centriole. It localises to the golgi apparatus membrane. In terms of biological role, negatively regulates cilia formation by recruiting the CP110-CEP97 complex (a negative regulator of ciliogenesis) at the distal end of the mother centriole in ciliary cells. At the beginning of cilia formation, MPHOSPH9 undergoes TTBK2-mediated phosphorylation and degradation via the ubiquitin-proteasome system and removes itself and the CP110-CEP97 complex from the distal end of the mother centriole, which subsequently promotes cilia formation. This Homo sapiens (Human) protein is M-phase phosphoprotein 9 (MPHOSPH9).